We begin with the raw amino-acid sequence, 660 residues long: Bifunctional polymyxin resistance protein ArnA (660 aa).

A formyltransferase ArnAFT region spans residues 1 to 304 (MKTVVFAYHD…TLGLVQGSRL (304 aa)). 86 to 88 (HLI) lines the (6R)-10-formyltetrahydrofolate pocket. Residue His104 is the Proton donor; for formyltransferase activity of the active site. Residues Arg114 and 136–140 (VKRAD) contribute to the (6R)-10-formyltetrahydrofolate site. The interval 314–660 (RRTRVLILGV…RTVDLTDKPS (347 aa)) is dehydrogenase ArnADH. Residues Asp347 and 368-369 (DI) contribute to the NAD(+) site. UDP-alpha-D-glucuronate contacts are provided by residues Ala393, Tyr398, and 432 to 433 (TS). Glu434 functions as the Proton acceptor; for decarboxylase activity in the catalytic mechanism. UDP-alpha-D-glucuronate-binding positions include Arg460, Asn492, 526–535 (KLIDGGKQKR), and Tyr613. Arg619 acts as the Proton donor; for decarboxylase activity in catalysis.

It in the N-terminal section; belongs to the Fmt family. UDP-L-Ara4N formyltransferase subfamily. This sequence in the C-terminal section; belongs to the NAD(P)-dependent epimerase/dehydratase family. UDP-glucuronic acid decarboxylase subfamily. In terms of assembly, homohexamer, formed by a dimer of trimers.

It carries out the reaction UDP-alpha-D-glucuronate + NAD(+) = UDP-beta-L-threo-pentopyranos-4-ulose + CO2 + NADH. The catalysed reaction is UDP-4-amino-4-deoxy-beta-L-arabinose + (6R)-10-formyltetrahydrofolate = UDP-4-deoxy-4-formamido-beta-L-arabinose + (6S)-5,6,7,8-tetrahydrofolate + H(+). It functions in the pathway nucleotide-sugar biosynthesis; UDP-4-deoxy-4-formamido-beta-L-arabinose biosynthesis; UDP-4-deoxy-4-formamido-beta-L-arabinose from UDP-alpha-D-glucuronate: step 1/3. It participates in nucleotide-sugar biosynthesis; UDP-4-deoxy-4-formamido-beta-L-arabinose biosynthesis; UDP-4-deoxy-4-formamido-beta-L-arabinose from UDP-alpha-D-glucuronate: step 3/3. The protein operates within bacterial outer membrane biogenesis; lipopolysaccharide biosynthesis. Its function is as follows. Bifunctional enzyme that catalyzes the oxidative decarboxylation of UDP-glucuronic acid (UDP-GlcUA) to UDP-4-keto-arabinose (UDP-Ara4O) and the addition of a formyl group to UDP-4-amino-4-deoxy-L-arabinose (UDP-L-Ara4N) to form UDP-L-4-formamido-arabinose (UDP-L-Ara4FN). The modified arabinose is attached to lipid A and is required for resistance to polymyxin and cationic antimicrobial peptides. This Shigella boydii serotype 4 (strain Sb227) protein is Bifunctional polymyxin resistance protein ArnA.